The primary structure comprises 502 residues: Glutamate--tRNA ligase (502 aa).

The short motif at 12 to 22 (PSPTGYLHVGG) is the 'HIGH' region element. Positions 259–263 (KLSKR) match the 'KMSKS' region motif. K262 is an ATP binding site.

It belongs to the class-I aminoacyl-tRNA synthetase family. Glutamate--tRNA ligase type 1 subfamily. Monomer.

The protein localises to the cytoplasm. It catalyses the reaction tRNA(Glu) + L-glutamate + ATP = L-glutamyl-tRNA(Glu) + AMP + diphosphate. Its function is as follows. Catalyzes the attachment of glutamate to tRNA(Glu) in a two-step reaction: glutamate is first activated by ATP to form Glu-AMP and then transferred to the acceptor end of tRNA(Glu). The sequence is that of Glutamate--tRNA ligase from Chlorobium phaeobacteroides (strain DSM 266 / SMG 266 / 2430).